The primary structure comprises 1228 residues: MARGRIRSKLRLSLLYTFGCLRPATLEGQDSQPIQGPGFSRTVFCNQPHMHKKKPLRYRSNYVSTTRYNLITFFPKSLYEQFHRAANLYFLVAAILSVFPLSPFNKWSMIAPLVFVVGLSMLKEALEDWRRFMQDVKINARKTCVHKSDGVFRQRKWKKVSVGDIVKVEKDEFFPADLLLLSSSYEDGICYVETMNLDGETNLKVKRSLEVSLPLDDDESFKNFMATIRCEDPNPNLYTFVGNLEFERQTFPLDPSQILLRDSKLRNTTYVYGVVVFTGFDTKVMQNSTKSPSKRSRIERTMDYIIYTLLVLLILISCISSSGFAWETEFHMPKMWYLRPGEPIDFTNPINPIYAGVVHLITALLLYGYLIPISLYVSIEVVKVWQASFINQDLHMYDDESGVPANARTSNLNEELGQVHTILSDKTGTLTCNQMDFLKCSIAGTSYGVRSSEVEVAAAKQMAVDLEEHGEISSTPQSQTKVYGTWDSSRTQEIEVEGDNNYNTPRAPIKGFGFEDNRLMNGNWLRESQPNDILQFFRILAICHTAIPELNEETGKYTYEAESPDEASFLAAAREFGFEFFKRTQSSVFIRERFSGSGQIIEREYKVLNLLEFTSKRKRMTVIVRDEEGQILLLCKGADSIIFERLAKNGKTYLGPTTRHLTEYGEAGLRTLALAYRKLDEDEYAAWNSEFLKAKTSIGSDRDELLETGADMIEKELILIGATAVEDKLQKGVPQCIDKLAQAGLKLWVLTGDKMETAINIGFACSLLRQGMRQICITSMNSEGGSQDSKRVVKENILNQLTKAVQMVKLEKDPHAAFALIIDGKTLTYALEDDMKYQFLALAVDCASVICCRVSPKQKALVVRLVKEGTGKTTLAIGDGANDVGMIQEADIGVGISGVEGMQAVMASDFSIAQFRFLERLLVVHGHWCYKRIAQMICYFFYKNIAFGLTLFYFEAFTGFSGQSVYNDYYLLLFNVVLTSLPVIALGVFEQDVSSEICLQFPALYQQGTKNLFFDWSRILGWMCNGVYASLVIFFLNIGIIYSQAFRDNGQTADMDAVGTTMFTCIIWAANVQIALTMSHFTWIQHVLIWGSIGMWYLFVAIYSMMPPSYSGNIYRILDEILAPAPIYWMATLLVTVAAVLPYVAHIAFQRFLNPLDHHIIQEIKYYGRDIEDARLWTRERTKAREKTKIGFTARVDAKIRHLRSKLNKKQSNLSHFSAQDAMSPRSL.

Topologically, residues 1–74 are cytoplasmic; sequence MARGRIRSKL…TTRYNLITFF (74 aa). A helical membrane pass occupies residues 75–96; it reads PKSLYEQFHRAANLYFLVAAIL. Over 97-100 the chain is Extracellular; sequence SVFP. The chain crosses the membrane as a helical span at residues 101 to 123; it reads LSPFNKWSMIAPLVFVVGLSMLK. At 124–305 the chain is on the cytoplasmic side; the sequence is EALEDWRRFM…SRIERTMDYI (182 aa). The helical transmembrane segment at 306-327 threads the bilayer; it reads IYTLLVLLILISCISSSGFAWE. Over 328-359 the chain is Extracellular; sequence TEFHMPKMWYLRPGEPIDFTNPINPIYAGVVH. Residues 360–377 form a helical membrane-spanning segment; that stretch reads LITALLLYGYLIPISLYV. At 378–934 the chain is on the cytoplasmic side; the sequence is SIEVVKVWQA…HGHWCYKRIA (557 aa). Catalysis depends on aspartate 425, which acts as the 4-aspartylphosphate intermediate. A Glycyl lysine isopeptide (Lys-Gly) (interchain with G-Cter in ubiquitin) cross-link involves residue lysine 616. 2 residues coordinate Mg(2+): aspartate 879 and aspartate 883. A helical membrane pass occupies residues 935–954; sequence QMICYFFYKNIAFGLTLFYF. Residues 955–968 lie on the Extracellular side of the membrane; it reads EAFTGFSGQSVYND. Residues 969–988 form a helical membrane-spanning segment; it reads YYLLLFNVVLTSLPVIALGV. At 989-1018 the chain is on the cytoplasmic side; that stretch reads FEQDVSSEICLQFPALYQQGTKNLFFDWSR. A helical transmembrane segment spans residues 1019–1041; sequence ILGWMCNGVYASLVIFFLNIGII. Over 1042-1054 the chain is Extracellular; that stretch reads YSQAFRDNGQTAD. The helical transmembrane segment at 1055 to 1077 threads the bilayer; that stretch reads MDAVGTTMFTCIIWAANVQIALT. Residues 1078–1083 are Cytoplasmic-facing; sequence MSHFTW. A helical transmembrane segment spans residues 1084–1104; sequence IQHVLIWGSIGMWYLFVAIYS. The Extracellular segment spans residues 1105–1117; that stretch reads MMPPSYSGNIYRI. A helical membrane pass occupies residues 1118–1146; that stretch reads LDEILAPAPIYWMATLLVTVAAVLPYVAH. At 1147–1228 the chain is on the cytoplasmic side; the sequence is IAFQRFLNPL…AQDAMSPRSL (82 aa).

This sequence belongs to the cation transport ATPase (P-type) (TC 3.A.3) family. Type IV subfamily.

The protein localises to the membrane. The catalysed reaction is ATP + H2O + phospholipidSide 1 = ADP + phosphate + phospholipidSide 2.. Its function is as follows. Involved in transport of phospholipids. This chain is Probable phospholipid-transporting ATPase 5, found in Arabidopsis thaliana (Mouse-ear cress).